The primary structure comprises 115 residues: Large ribosomal subunit protein bL19 (115 aa).

It belongs to the bacterial ribosomal protein bL19 family.

In terms of biological role, this protein is located at the 30S-50S ribosomal subunit interface and may play a role in the structure and function of the aminoacyl-tRNA binding site. The chain is Large ribosomal subunit protein bL19 from Clostridium kluyveri (strain ATCC 8527 / DSM 555 / NBRC 12016 / NCIMB 10680 / K1).